We begin with the raw amino-acid sequence, 119 residues long: Acidic phospholipase A2 E (119 aa).

Intrachain disulfides connect C11–C71, C26–C118, C28–C44, C43–C99, C50–C92, C60–C85, and C78–C90. Residues Y27, G29, and G31 each coordinate Ca(2+). The active site involves H47. D48 lines the Ca(2+) pocket. The active site involves D93.

Belongs to the phospholipase A2 family. Group I subfamily. D49 sub-subfamily. Ca(2+) is required as a cofactor. As to expression, expressed by the venom gland.

Its subcellular location is the secreted. It catalyses the reaction a 1,2-diacyl-sn-glycero-3-phosphocholine + H2O = a 1-acyl-sn-glycero-3-phosphocholine + a fatty acid + H(+). Its function is as follows. PLA2 catalyzes the calcium-dependent hydrolysis of the 2-acyl groups in 3-sn-phosphoglycerides. The sequence is that of Acidic phospholipase A2 E from Naja oxiana (Central Asian cobra).